Consider the following 500-residue polypeptide: Carnosic acid synthase (500 aa).

The helical transmembrane segment at 4-24 (LILLSLAFLASCVVAYSRRRP) threads the bilayer. Cys-443 contributes to the heme binding site.

Belongs to the cytochrome P450 family. Heme serves as cofactor. Expressed in leaf glandular trichomes.

It is found in the membrane. It catalyses the reaction 11-hydroxyferruginol + 3 reduced [NADPH--hemoprotein reductase] + 3 O2 = carnosate + 3 oxidized [NADPH--hemoprotein reductase] + 4 H2O + 4 H(+). It carries out the reaction miltiradiene + 2 reduced [NADPH--hemoprotein reductase] + 2 O2 = miltiradien-20-al + 2 oxidized [NADPH--hemoprotein reductase] + 3 H2O + 2 H(+). The enzyme catalyses ferruginol + 3 reduced [NADPH--hemoprotein reductase] + 3 O2 = pisiferate + 3 oxidized [NADPH--hemoprotein reductase] + 4 H2O + 4 H(+). Its pathway is secondary metabolite biosynthesis; terpenoid biosynthesis. Functionally, monooxygenase involved in the biosynthesis of carnosate, a potent antioxidant labdane-related diterpene natural product. Catalyzes the oxidation of 11-hydroxyferruginol to produce carnosate. Mediates the conversion of miltiradien into miltiradien-20-al. Also involved in the production of pisiferic acid and derivative products from ferruginol. This is Carnosic acid synthase from Salvia pomifera (Apple sage).